Consider the following 1480-residue polypeptide: MENSEDISLNSSEKSIESSVVNLEDQQQSQQQTQQQTCQKTFVQEAPELTILIDKLIQLKHSNKDELISNTTRIIYIIDQYLEQPTLLDIHLNDIIQPLINFIKSNYINNSNNNNTTTTTTTIMTETEIVIKKLSIKNSFRIIYVLSKVRGFKTIVKLFQHEAIDLLPVLDQLEISYHQWVNINKQRDRLNEISVSYSSGINLKNYIKPEEESEQEVVDENNNNINNNHNIDDEYNENIISWEEVYVLALWVSLLVIIPFKFSSLDSASSGTASAAGDGGDGDGDGQLKSISSRILKLGKLALSDVSKIRDSFSELLSKLLNRPDMKFEQKQFIKWCTNSIQLISNNNNNNNQNNSSNNNILLIIGIYSTLATMFKKGNRLDFLPIDMNLYEKIMEANKYLSLSGSERITKKIFLKLLQRIAIIMLPPVSASWRYQKIIKPLLLKGELIKQINNNNNNNNNENNNEEGEEEEEEIPEEIDEILEEIMKSLKDKDTIIRWTSAKAIGRIVNLLPKDMGDQVIGLVIDQMFEKNEFIDADPSAWHGGCLALAELARRGLLLPERLDVVVPLVIRALFFDIIKGTYSIGSHVRDSACYLCWALARTYHNSILSPYLLPICRNLVVVSLYDREINCRKSASAAFQEMVGRHQGLVPNGIEIVTSADFFTVGNKNNSFTSLTTFIGKFQIDYYPIVIKHLATIKIYNWDLEIRQLASKSIHLLTNINPNDIVSNYLPLIIPNTQSDLVHVKHGASLAISEILISLFENNNINLLSDNLKMMILMTIKNTKNEKLFKGKGGVLIRIGMCKIIYSICLVEFSLDKNLSEIKKPTESTSTNGNEDRAAALKLKIAMLKAKTASQINKPIITPPSSKSTTNNNNNNNNNNLNDNEIAFNIILGYLNENLNHPNEEVQKEASKAFELLFSKYISSNEKISLLLELIDSHCKTLKFDINRSARRGSSLLLGSLPFNSANLSYDLLSKVVNELILSIFQDDPKFKDIETRVNSISSLYKIGIYILNLIFKNQENEQKEEEDFKKSKNYNLFIKIWNCLGLATNDYSIDKRGDIGSWVRELSCKVLFDFIKFIITNQNSSTTTTTASTTDLSIENLINEKMITEFICKLFQLSGEKLDKIRDVACKIIHELLWIENPSSINNIPHKEELKKIIVKDQDVHFNWFRTEESLPLICKVLKFNCYLYPLLFGLFSSLGGTSKYLINDSIQSIKQYFSSFDNDEKERFEKIISFSKAILEITNNTTQRMIQPTFRSIYNLLSTHIFDFLIINNLNEQSIFETILFNCYQIIESNQDDIYLLLNSIELFSYFFIQFENNNNEYIKDYSLKALLLLLSNLKYPKVRKLASDQLKKSTRLFINNNGDDETPSLIKSLIFNTKWDDSVDLIIEPLKSLLLLLNQKHLLELLSENPTKKPIPLAPPITSIEELKDKIQNPHKQSDDNNNNNNGELINNNTENNNNNNFDDNLPEDSQDLMEI.

Disordered stretches follow at residues 1-32 (MENS…SQQQ) and 453-476 (NNNN…EEIP). Low complexity-rich tracts occupy residues 7–32 (ISLN…SQQQ) and 453–463 (NNNNNNNNNEN). Over residues 464–476 (NNEEGEEEEEEIP) the composition is skewed to acidic residues. One copy of the HEAT 1 repeat lies at 482–520 (ILEEIMKSLKDKDTIIRWTSAKAIGRIVNLLPKDMGDQV). Positions 859–880 (KPIITPPSSKSTTNNNNNNNNN) are disordered. The HEAT 2 repeat unit spans residues 886 to 922 (EIAFNIILGYLNENLNHPNEEVQKEASKAFELLFSKY). The tract at residues 1437-1480 (NPHKQSDDNNNNNNGELINNNTENNNNNNFDDNLPEDSQDLMEI) is disordered. Residues 1444-1468 (DNNNNNNGELINNNTENNNNNNFDD) show a composition bias toward low complexity. Residues 1469–1480 (NLPEDSQDLMEI) are compositionally biased toward acidic residues.

The protein belongs to the TBCD family. In terms of assembly, supercomplex made of cofactors A to E. Cofactors A and D function by capturing and stabilizing tubulin in a quasi-native conformation. Cofactor E binds to the cofactor D-tubulin complex; interaction with cofactor C then causes the release of tubulin polypeptides that are committed to the native state.

In terms of biological role, tubulin-folding protein; involved in the first step of the tubulin folding pathway. The chain is Tubulin-specific chaperone D (tbcd) from Dictyostelium discoideum (Social amoeba).